The chain runs to 186 residues: UPF0301 protein CV_3909 (186 aa).

The protein belongs to the UPF0301 (AlgH) family.

In Chromobacterium violaceum (strain ATCC 12472 / DSM 30191 / JCM 1249 / CCUG 213 / NBRC 12614 / NCIMB 9131 / NCTC 9757 / MK), this protein is UPF0301 protein CV_3909.